The primary structure comprises 265 residues: Synaptoporin (265 aa).

Over 1-4 the chain is Cytoplasmic; sequence MCMV. The 202-residue stretch at 1–202 folds into the MARVEL domain; that stretch reads MCMVIFAPLF…NIWFVFKETG (202 aa). A helical transmembrane segment spans residues 5 to 25; it reads IFAPLFAMFAFATCGGYSGGL. Residues 26–81 lie on the Vesicular side of the membrane; sequence RLSVDCVNKTESNLSIDIAFAYPFRLQQVTFEVPTCEGKEQQKLALVGDSSSSAEF. 2 N-linked (GlcNAc...) asparagine glycosylation sites follow: asparagine 33 and asparagine 38. The chain crosses the membrane as a helical span at residues 82–102; that stretch reads FVTVAVFAFLYSLAATVVYIF. The Cytoplasmic portion of the chain corresponds to 103 to 114; that stretch reads FQNKYRENNRGP. A helical transmembrane segment spans residues 115–135; the sequence is LIDFIVTVVFSFLWLVGSSAW. The Vesicular portion of the chain corresponds to 136 to 177; it reads AKGLSDVKVATDPKEVLLLMSACKQPSNKCMAVHSPVMSSLN. A helical membrane pass occupies residues 178-198; sequence TSVVFGFLNFILWAGNIWFVF. The Cytoplasmic segment spans residues 199–265; that stretch reads KETGWHSSGQ…SGPTSFNNQI (67 aa). A run of 5 repeats spans residues 210-214, 222-226, 227-231, 232-236, and 238-242. The tract at residues 210-242 is 5 X approximate repeats; the sequence is YLSDPMEKHSSSYNQGRYNQESYGSSGGYSQQA. A Phosphoserine modification is found at serine 212. Positions 221 to 230 are enriched in polar residues; it reads SYNQGRYNQE. The interval 221 to 265 is disordered; the sequence is SYNQGRYNQESYGSSGGYSQQANLGPTSDEFGQQPSGPTSFNNQI. Positions 240-265 are enriched in polar residues; sequence QQANLGPTSDEFGQQPSGPTSFNNQI.

Belongs to the synaptophysin/synaptobrevin family.

It localises to the cytoplasmic vesicle. The protein resides in the secretory vesicle. Its subcellular location is the synaptic vesicle membrane. It is found in the synapse. The protein localises to the synaptosome. Functionally, intrinsic membrane protein of small synaptic vesicles. Probable vesicular channel protein. This is Synaptoporin (Synpr) from Mus musculus (Mouse).